The chain runs to 109 residues: Nucleoid-associated protein MS1507 (109 aa).

Residues 1-21 (MFGKGGLGNLMKQAQQMQERM) are disordered.

The protein belongs to the YbaB/EbfC family. As to quaternary structure, homodimer.

The protein localises to the cytoplasm. It localises to the nucleoid. In terms of biological role, binds to DNA and alters its conformation. May be involved in regulation of gene expression, nucleoid organization and DNA protection. The protein is Nucleoid-associated protein MS1507 of Mannheimia succiniciproducens (strain KCTC 0769BP / MBEL55E).